The sequence spans 183 residues: Small ribosomal subunit protein uS4c (183 aa).

The S4 RNA-binding domain maps to 82-143 (MRLDNILFRL…KQRSKALIQN (62 aa)).

It belongs to the universal ribosomal protein uS4 family. As to quaternary structure, part of the 30S ribosomal subunit. Contacts protein S5. The interaction surface between S4 and S5 is involved in control of translational fidelity.

It localises to the plastid. The protein resides in the chloroplast. One of the primary rRNA binding proteins, it binds directly to 16S rRNA where it nucleates assembly of the body of the 30S subunit. Functionally, with S5 and S12 plays an important role in translational accuracy. The protein is Small ribosomal subunit protein uS4c (rps4) of Gladiolus communis (Cornflag).